A 962-amino-acid polypeptide reads, in one-letter code: Phagocyte signaling-impaired protein (962 aa).

TPR repeat units lie at residues 45-78 (LCARALKGLALLRLGRYEESHGCLQAVAEDKPTD), 79-112 (DSTLQVLSFCYREMEQLNKIVELYQHAVKKNPGN), and 523-560 (QIQLDSMGYVHCQLLPLCGRFSGARNSYDTTMKFFTNS). The tract at residues 856 to 880 (TKVKKKQGDNKTQDTPQPVSEKERS) is disordered.

Belongs to the MDM20/NAA25 family. In terms of assembly, component of the N-terminal acetyltransferase B (NatB) complex.

It localises to the lysosome. In terms of biological role, non-catalytic subunit of the NatB complex which catalyzes acetylation of the N-terminal methionine residues of proteins beginning with Met-Asp or Met-Glu. Has 2 roles in the larval immune response: required both for the phagocytic degradation of internalized bacteria and for the induction of Defensin in the fat body. Within the phagocytic blood cells, has a role in detection of infection and activation of the humoral immune response. The chain is Phagocyte signaling-impaired protein from Drosophila pseudoobscura pseudoobscura (Fruit fly).